A 338-amino-acid polypeptide reads, in one-letter code: 1-aminocyclopropane-1-carboxylate deaminase (338 aa).

Position 51 is an N6-(pyridoxal phosphate)lysine (lysine 51). Serine 78 (nucleophile) is an active-site residue.

This sequence belongs to the ACC deaminase/D-cysteine desulfhydrase family. Homotrimer. Pyridoxal 5'-phosphate serves as cofactor.

The catalysed reaction is 1-aminocyclopropane-1-carboxylate + H2O = 2-oxobutanoate + NH4(+). In terms of biological role, catalyzes a cyclopropane ring-opening reaction, the irreversible conversion of 1-aminocyclopropane-1-carboxylate (ACC) to ammonia and alpha-ketobutyrate. Allows growth on ACC as a nitrogen source. This chain is 1-aminocyclopropane-1-carboxylate deaminase, found in Burkholderia cenocepacia (strain HI2424).